The primary structure comprises 498 residues: ATP synthase subunit beta, chloroplastic (498 aa).

172-179 (GGAGVGKT) contributes to the ATP binding site.

This sequence belongs to the ATPase alpha/beta chains family. F-type ATPases have 2 components, CF(1) - the catalytic core - and CF(0) - the membrane proton channel. CF(1) has five subunits: alpha(3), beta(3), gamma(1), delta(1), epsilon(1). CF(0) has four main subunits: a(1), b(1), b'(1) and c(9-12).

Its subcellular location is the plastid. It localises to the chloroplast thylakoid membrane. It catalyses the reaction ATP + H2O + 4 H(+)(in) = ADP + phosphate + 5 H(+)(out). Functionally, produces ATP from ADP in the presence of a proton gradient across the membrane. The catalytic sites are hosted primarily by the beta subunits. This chain is ATP synthase subunit beta, chloroplastic, found in Zea mays (Maize).